The sequence spans 141 residues: Large ribosomal subunit protein uL11 (141 aa).

Belongs to the universal ribosomal protein uL11 family. As to quaternary structure, part of the ribosomal stalk of the 50S ribosomal subunit. Interacts with L10 and the large rRNA to form the base of the stalk. L10 forms an elongated spine to which L12 dimers bind in a sequential fashion forming a multimeric L10(L12)X complex. In terms of processing, one or more lysine residues are methylated.

Forms part of the ribosomal stalk which helps the ribosome interact with GTP-bound translation factors. The protein is Large ribosomal subunit protein uL11 of Chlorobium phaeobacteroides (strain BS1).